Reading from the N-terminus, the 582-residue chain is uncharacterized protein (582 aa).

6 consecutive transmembrane segments (helical) span residues 17-37 (VAML…LPTV), 57-77 (LGAV…GAVY), 131-151 (MTAT…IMAI), 156-176 (ALTW…YWII), 239-259 (ALML…LIWF), and 271-291 (VGSL…VLMA). The ABC transmembrane type-1 domain maps to 17–300 (VAMLMMLQLV…ATMTLAVLPR (284 aa)). Residues 335–571 (VRLAGATFTY…CPTYAEFAAS (237 aa)) form the ABC transporter domain. An ATP-binding site is contributed by 369 to 376 (GSTGSGKS).

This sequence belongs to the ABC transporter superfamily. MsbA family.

It is found in the cell membrane. This is an uncharacterized protein from Mycobacterium bovis (strain ATCC BAA-935 / AF2122/97).